We begin with the raw amino-acid sequence, 270 residues long: Cytosolic Fe-S cluster assembly factor NUBP2 homolog (270 aa).

21–28 (GKGGVGKS) is an ATP binding site. [4Fe-4S] cluster contacts are provided by cysteine 195 and cysteine 198.

The protein belongs to the Mrp/NBP35 ATP-binding proteins family. NUBP2/CFD1 subfamily. As to quaternary structure, heterotetramer of 2 NUBP1 and 2 NUBP2 chains. [4Fe-4S] cluster serves as cofactor.

It localises to the cytoplasm. Component of the cytosolic iron-sulfur (Fe/S) protein assembly (CIA) machinery. Required for maturation of extramitochondrial Fe-S proteins. The NUBP1-NUBP2 heterotetramer forms a Fe-S scaffold complex, mediating the de novo assembly of an Fe-S cluster and its transfer to target apoproteins. The chain is Cytosolic Fe-S cluster assembly factor NUBP2 homolog from Nematostella vectensis (Starlet sea anemone).